The primary structure comprises 330 residues: Ribosomal RNA small subunit methyltransferase H (330 aa).

S-adenosyl-L-methionine contacts are provided by residues 51 to 53 (GGH), Asp-70, Asp-118, and Gln-125. The tract at residues 276-330 (STDSTPPGLPVPLPDRQPELRLLTRGAELPTEQETAANPRAASARLRAAERTREP) is disordered. Residues 311–321 (AANPRAASARL) are compositionally biased toward low complexity.

Belongs to the methyltransferase superfamily. RsmH family.

The protein localises to the cytoplasm. The catalysed reaction is cytidine(1402) in 16S rRNA + S-adenosyl-L-methionine = N(4)-methylcytidine(1402) in 16S rRNA + S-adenosyl-L-homocysteine + H(+). Its function is as follows. Specifically methylates the N4 position of cytidine in position 1402 (C1402) of 16S rRNA. In Thermobifida fusca (strain YX), this protein is Ribosomal RNA small subunit methyltransferase H.